A 197-amino-acid polypeptide reads, in one-letter code: Ribonuclease HII (197 aa).

Residues 11–197 enclose the RNase H type-2 domain; that stretch reads GRIAGVDEVG…FGPVKRVLGL (187 aa). A divalent metal cation is bound by residues Asp-17, Glu-18, and Asp-109.

Belongs to the RNase HII family. Mn(2+) serves as cofactor. It depends on Mg(2+) as a cofactor.

The protein resides in the cytoplasm. The catalysed reaction is Endonucleolytic cleavage to 5'-phosphomonoester.. Its function is as follows. Endonuclease that specifically degrades the RNA of RNA-DNA hybrids. The sequence is that of Ribonuclease HII from Edwardsiella ictaluri (strain 93-146).